Here is a 689-residue protein sequence, read N- to C-terminus: Long-chain-fatty-acid--CoA ligase 2 (689 aa).

Residue 252 to 263 (YTSGSTGKPKGV) coordinates ATP. An FACS motif is present at residues 518-567 (DGWFKTGDVGEIAKGNTLRLIDRKKNIVKSLNGEYIALEKIEAQFFTSPL).

Belongs to the ATP-dependent AMP-binding enzyme family. The cofactor is Mg(2+).

Its subcellular location is the golgi apparatus. The protein localises to the vacuole membrane. It carries out the reaction a long-chain fatty acid + ATP + CoA = a long-chain fatty acyl-CoA + AMP + diphosphate. In terms of biological role, esterification, concomitant with transport, of endogenous long-chain fatty acids into metabolically active CoA thioesters for subsequent degradation or incorporation into phospholipids. Plays an important role in the determination of viability in the stationary phase. The polypeptide is Long-chain-fatty-acid--CoA ligase 2 (lcf2) (Schizosaccharomyces pombe (strain 972 / ATCC 24843) (Fission yeast)).